Here is a 289-residue protein sequence, read N- to C-terminus: 4-hydroxy-tetrahydrodipicolinate synthase (289 aa).

Thr-42 provides a ligand contact to pyruvate. The active-site Proton donor/acceptor is Tyr-129. Residue Lys-157 is the Schiff-base intermediate with substrate of the active site. Ile-198 is a pyruvate binding site.

The protein belongs to the DapA family. In terms of assembly, homotetramer; dimer of dimers.

Its subcellular location is the cytoplasm. The catalysed reaction is L-aspartate 4-semialdehyde + pyruvate = (2S,4S)-4-hydroxy-2,3,4,5-tetrahydrodipicolinate + H2O + H(+). It participates in amino-acid biosynthesis; L-lysine biosynthesis via DAP pathway; (S)-tetrahydrodipicolinate from L-aspartate: step 3/4. Catalyzes the condensation of (S)-aspartate-beta-semialdehyde [(S)-ASA] and pyruvate to 4-hydroxy-tetrahydrodipicolinate (HTPA). The protein is 4-hydroxy-tetrahydrodipicolinate synthase of Chlamydia caviae (strain ATCC VR-813 / DSM 19441 / 03DC25 / GPIC) (Chlamydophila caviae).